The sequence spans 68 residues: MKVYDCCDKVRELYSLIGSGDQGYIPQAITCAVKTLNDIAADESLPKEARERAAFAAANLLISDFEDK.

It belongs to the UPF0253 family.

This chain is UPF0253 protein VFMJ11_0680, found in Aliivibrio fischeri (strain MJ11) (Vibrio fischeri).